A 526-amino-acid chain; its full sequence is Glucose-6-phosphate isomerase (526 aa).

The active-site Proton donor is Glu320. Residues His349 and Lys453 contribute to the active site.

Belongs to the GPI family.

It is found in the cytoplasm. It catalyses the reaction alpha-D-glucose 6-phosphate = beta-D-fructose 6-phosphate. It participates in carbohydrate biosynthesis; gluconeogenesis. The protein operates within carbohydrate degradation; glycolysis; D-glyceraldehyde 3-phosphate and glycerone phosphate from D-glucose: step 2/4. Catalyzes the reversible isomerization of glucose-6-phosphate to fructose-6-phosphate. The polypeptide is Glucose-6-phosphate isomerase (Rippkaea orientalis (strain PCC 8801 / RF-1) (Cyanothece sp. (strain PCC 8801))).